The primary structure comprises 304 residues: Probable aspartoacylase (304 aa).

The Zn(2+) site is built by His-13 and Glu-16. Substrate-binding positions include Arg-55 and 62 to 63 (NR). A Zn(2+)-binding site is contributed by His-104. Positions 162 and 272 each coordinate substrate.

The protein belongs to the AspA/AstE family. Aspartoacylase subfamily. Zn(2+) serves as cofactor.

The enzyme catalyses an N-acyl-L-aspartate + H2O = a carboxylate + L-aspartate. This chain is Probable aspartoacylase, found in Synechococcus sp. (strain CC9605).